Reading from the N-terminus, the 286-residue chain is MNEDTPPFYFISVCDNFRDNTAEHVFDMLIERHSSFENYPIENTAFINSLIVNGFKYNQVDDHVVCEYCEAEIKNWSEDECIEYAHVTLSPYCAYANKIAERESFGDNITINAVLVKEGKPKCVYRCMSNLQSRMDTFVNFWPAALRDMITNIAEAGLFYTGRGDETVCFFCDCCVRDWHTNEDTWQRHAAENPQCYFVLSVKGKEFCQNSITVTHVDKRDDDNLNENADDIEEKYECKVCLERQRDAVLMPCRHFCVCVQCYFGLDQKCPTCRQDVTDFIKIFVV.

BIR repeat units lie at residues 29-96 and 131-199; these read LIER…CAYA and LQSR…CYFV. Positions 169, 172, 189, and 196 each coordinate Zn(2+). The segment at 238 to 274 adopts an RING-type zinc-finger fold; the sequence is CKVCLERQRDAVLMPCRHFCVCVQCYFGLDQKCPTCR.

In terms of biological role, acts by blocking cellular apoptosis early in infection. Later, stimulates caspase-3-like protease activity and induces apoptosis, probably to favor the release of occluded virions. This chain is Apoptosis inhibitor 1 (IAP1), found in Lepidoptera (butterflies and moths).